A 153-amino-acid polypeptide reads, in one-letter code: Agglutinin (153 aa).

Beta-D-galactosyl-(1-&gt;3)-N-acetyl-D-galactosamine contacts are provided by residues 22 to 25 and Asn-46; that span reads NAWE. A Ricin B-type lectin domain is found at 58–153; that stretch reads GDSAEYLIIN…DNQKWYFDAK (96 aa).

Homodimer.

Its function is as follows. Lectin that primarily recognizes glycans with a non-reducing terminal N-acetylgalactosamine (GalNAc), with a preference for the alpha- over the beta-anomer. Can also bind non-reducing terminal galactose (Gal) residues but with a lower affinity. Strongly interacts with glycolipid type glycans with terminal non-reducing Gal or GalNAc but fails to bind sialylated or fucosylated forms of the same glycans. Strongly interacts with galactosylated N-glycans, displaying highest affinity for alpha-1-3 branched mono-antennary N-glycans but also binding to multi-antennary glycans. The chain is Agglutinin from Sclerotinia sclerotiorum (strain ATCC 18683 / 1980 / Ss-1) (White mold).